A 494-amino-acid chain; its full sequence is tRNA-2-methylthio-N(6)-dimethylallyladenosine synthase (494 aa).

The MTTase N-terminal domain maps to proline 12–histidine 131. Residues cysteine 21, cysteine 60, cysteine 94, cysteine 168, cysteine 172, and cysteine 175 each coordinate [4Fe-4S] cluster. In terms of domain architecture, Radical SAM core spans arginine 154–glutamate 385. The TRAM domain maps to lysine 387–leucine 457.

It belongs to the methylthiotransferase family. MiaB subfamily. In terms of assembly, monomer. Requires [4Fe-4S] cluster as cofactor.

The protein localises to the cytoplasm. The enzyme catalyses N(6)-dimethylallyladenosine(37) in tRNA + (sulfur carrier)-SH + AH2 + 2 S-adenosyl-L-methionine = 2-methylsulfanyl-N(6)-dimethylallyladenosine(37) in tRNA + (sulfur carrier)-H + 5'-deoxyadenosine + L-methionine + A + S-adenosyl-L-homocysteine + 2 H(+). In terms of biological role, catalyzes the methylthiolation of N6-(dimethylallyl)adenosine (i(6)A), leading to the formation of 2-methylthio-N6-(dimethylallyl)adenosine (ms(2)i(6)A) at position 37 in tRNAs that read codons beginning with uridine. The chain is tRNA-2-methylthio-N(6)-dimethylallyladenosine synthase from Cutibacterium acnes (strain DSM 16379 / KPA171202) (Propionibacterium acnes).